The following is a 291-amino-acid chain: MANAKEIRTKIASVQNTQKITSAMEMVAASKMRKVQDNMAATRPYAENMRKVISHVASGSLEYKHPYLEEREAKRVAYIIISSDRGLCGGLNSNLFKRALTDMRQWQEKNVEVDLTLIGSKAISFFHRFGNVIAQTSGLGDKPKLEDLLGAVTAMLEHFDDGKIDRLYLVYNEFVNTMVQNPRITQLLPHPDKDESQDSKPNDATSRWDYIYEPDPKDILNALMLRYIESQVYQGTVESIACEQAARMVAMKSATDNAGDIINDLQLVYNKARQSAITQELSEIVAGAQAV.

The interval 187 to 208 is disordered; that stretch reads LLPHPDKDESQDSKPNDATSRW. The span at 190-201 shows a compositional bias: basic and acidic residues; it reads HPDKDESQDSKP.

Belongs to the ATPase gamma chain family. F-type ATPases have 2 components, CF(1) - the catalytic core - and CF(0) - the membrane proton channel. CF(1) has five subunits: alpha(3), beta(3), gamma(1), delta(1), epsilon(1). CF(0) has three main subunits: a, b and c.

The protein localises to the cell inner membrane. Functionally, produces ATP from ADP in the presence of a proton gradient across the membrane. The gamma chain is believed to be important in regulating ATPase activity and the flow of protons through the CF(0) complex. This chain is ATP synthase gamma chain 2, found in Photobacterium profundum (strain SS9).